A 203-amino-acid polypeptide reads, in one-letter code: Vexin (203 aa).

Residues 59 to 70 (HRTDRRDGEGRW) are compositionally biased toward basic and acidic residues. Residues 59–101 (HRTDRRDGEGRWSGRFQNPRLQGPHPAKTPARPVGTSEPKSAN) form a disordered region.

Belongs to the vexin family.

Its subcellular location is the cell membrane. It localises to the nucleus. Functionally, required for neurogenesis in the neural plate and retina. Strongly cooperates with neural bHLH factors to promote neurogenesis. The sequence is that of Vexin from Bos taurus (Bovine).